We begin with the raw amino-acid sequence, 556 residues long: Membrane protein insertase YidC (556 aa).

A helical membrane pass occupies residues 5-25 (TLTAIVLSFVLLTAFQFYMAW). The disordered stretch occupies residues 36–74 (QVQSGESSAPAPLASTAPVADALPPPVEGMAGSAPQQAM). Positions 42 to 55 (SSAPAPLASTAPVA) are enriched in low complexity. The next 4 helical transmembrane spans lie at 370–390 (NYGV…FPLA), 441–461 (LPIL…FLSV), 468–488 (FMLW…PLLM), and 510–530 (IMMF…SGLV).

The protein belongs to the OXA1/ALB3/YidC family. Type 1 subfamily. Interacts with the Sec translocase complex via SecD. Specifically interacts with transmembrane segments of nascent integral membrane proteins during membrane integration.

Its subcellular location is the cell inner membrane. In terms of biological role, required for the insertion and/or proper folding and/or complex formation of integral membrane proteins into the membrane. Involved in integration of membrane proteins that insert both dependently and independently of the Sec translocase complex, as well as at least some lipoproteins. Aids folding of multispanning membrane proteins. This chain is Membrane protein insertase YidC, found in Magnetococcus marinus (strain ATCC BAA-1437 / JCM 17883 / MC-1).